The chain runs to 506 residues: DNA nucleotidylexotransferase (506 aa).

Positions S11 to K17 match the Nuclear localization signal motif. The BRCT domain occupies G27 to H124. The involved in DNA binding stretch occupies residues V258 to T262. A 2'-deoxyribonucleoside 5'-triphosphate-binding positions include G333–K338 and H342–D345. Positions 343, 345, and 430 each coordinate Mg(2+). G445–W446 serves as a coordination point for a 2'-deoxyribonucleoside 5'-triphosphate.

This sequence belongs to the DNA polymerase type-X family. The cofactor is Mg(2+).

The protein resides in the nucleus. It carries out the reaction DNA(n) + a 2'-deoxyribonucleoside 5'-triphosphate = DNA(n+1) + diphosphate. Template-independent DNA polymerase which catalyzes the random addition of deoxynucleoside 5'-triphosphate to the 3'-end of a DNA initiator. One of the in vivo functions of this enzyme is the addition of nucleotides at the junction (N region) of rearranged Ig heavy chain and T-cell receptor gene segments during the maturation of B- and T-cells. This chain is DNA nucleotidylexotransferase (DNTT), found in Gallus gallus (Chicken).